The chain runs to 348 residues: GTP 3',8-cyclase (348 aa).

The region spanning P24–D242 is the Radical SAM core domain. R33 is a binding site for GTP. 2 residues coordinate [4Fe-4S] cluster: C40 and C44. Y46 contacts S-adenosyl-L-methionine. C47 provides a ligand contact to [4Fe-4S] cluster. Residue R82 participates in GTP binding. Residue G86 coordinates S-adenosyl-L-methionine. A GTP-binding site is contributed by T115. Position 139 (S139) interacts with S-adenosyl-L-methionine. K175 lines the GTP pocket. Residue M209 participates in S-adenosyl-L-methionine binding. Residues C272 and C275 each contribute to the [4Fe-4S] cluster site. R277–R279 serves as a coordination point for GTP. C289 is a binding site for [4Fe-4S] cluster.

The protein belongs to the radical SAM superfamily. MoaA family. As to quaternary structure, monomer and homodimer. It depends on [4Fe-4S] cluster as a cofactor.

The catalysed reaction is GTP + AH2 + S-adenosyl-L-methionine = (8S)-3',8-cyclo-7,8-dihydroguanosine 5'-triphosphate + 5'-deoxyadenosine + L-methionine + A + H(+). It participates in cofactor biosynthesis; molybdopterin biosynthesis. Functionally, catalyzes the cyclization of GTP to (8S)-3',8-cyclo-7,8-dihydroguanosine 5'-triphosphate. The chain is GTP 3',8-cyclase from Rhizobium etli (strain CIAT 652).